Here is a 734-residue protein sequence, read N- to C-terminus: Photosystem I P700 chlorophyll a apoprotein A2 (734 aa).

Transmembrane regions (helical) follow at residues 46-69, 135-158, 175-199, 273-291, 330-353, 369-395, 417-439, and 517-535; these read IFAS…FHVA, LYTG…LHLQ, LNHH…HVAI, MAHH…GHMY, IHFQ…QHMY, AALY…IFFI, AIIS…LYVH, and FLVH…LILV. Residues C559 and C568 each contribute to the [4Fe-4S] cluster site. 2 helical membrane passes run 575-596 and 643-665; these read AFYL…YWHW and LSVW…MFLI. Chlorophyll a is bound by residues H654, M662, and Y670. W671 lines the phylloquinone pocket. Residues 707–727 traverse the membrane as a helical segment; that stretch reads LVGLAHFSVGYIFTYAAFLIA.

Belongs to the PsaA/PsaB family. As to quaternary structure, the PsaA/B heterodimer binds the P700 chlorophyll special pair and subsequent electron acceptors. PSI consists of a core antenna complex that captures photons, and an electron transfer chain that converts photonic excitation into a charge separation. The eukaryotic PSI reaction center is composed of at least 11 subunits. Requires P700 is a chlorophyll a/chlorophyll a' dimer, A0 is one or more chlorophyll a, A1 is one or both phylloquinones and FX is a shared 4Fe-4S iron-sulfur center. as cofactor.

Its subcellular location is the plastid. The protein localises to the chloroplast thylakoid membrane. The enzyme catalyses reduced [plastocyanin] + hnu + oxidized [2Fe-2S]-[ferredoxin] = oxidized [plastocyanin] + reduced [2Fe-2S]-[ferredoxin]. In terms of biological role, psaA and PsaB bind P700, the primary electron donor of photosystem I (PSI), as well as the electron acceptors A0, A1 and FX. PSI is a plastocyanin-ferredoxin oxidoreductase, converting photonic excitation into a charge separation, which transfers an electron from the donor P700 chlorophyll pair to the spectroscopically characterized acceptors A0, A1, FX, FA and FB in turn. Oxidized P700 is reduced on the lumenal side of the thylakoid membrane by plastocyanin. This Helianthus annuus (Common sunflower) protein is Photosystem I P700 chlorophyll a apoprotein A2.